The primary structure comprises 148 residues: Proline-rich protein 13 (148 aa).

Positions 1–148 (MWNPNAGQPG…SSSSSSSDSD (148 aa)) are disordered. Composition is skewed to pro residues over residues 27–67 (AHPP…PQPG) and 75–93 (GPYP…PVNP). The segment covering 109 to 135 (MQKKMKKAHKKMHKHQKHHKYHKHGKH) has biased composition (basic residues). The span at 136 to 148 (SSSSSSSSSSDSD) shows a compositional bias: low complexity.

The protein localises to the nucleus. Negatively regulates TSP1 expression at the level of transcription. This down-regulation was shown to reduce taxane-induced apoptosis. The polypeptide is Proline-rich protein 13 (PRR13) (Homo sapiens (Human)).